A 37-amino-acid chain; its full sequence is Large ribosomal subunit protein bL36 (37 aa).

This sequence belongs to the bacterial ribosomal protein bL36 family.

In Bordetella bronchiseptica (strain ATCC BAA-588 / NCTC 13252 / RB50) (Alcaligenes bronchisepticus), this protein is Large ribosomal subunit protein bL36.